The primary structure comprises 342 residues: Farnesyl pyrophosphate synthase 2 (342 aa).

Isopentenyl diphosphate contacts are provided by Lys47, Arg50, and Gln86. Residues Asp93 and Asp97 each contribute to the Mg(2+) site. Arg102 provides a ligand contact to dimethylallyl diphosphate. Residue Arg103 participates in isopentenyl diphosphate binding. The dimethylallyl diphosphate site is built by Lys190, Thr191, Gln229, Lys246, and Lys255.

Belongs to the FPP/GGPP synthase family. Mg(2+) serves as cofactor.

The protein resides in the cytoplasm. The enzyme catalyses isopentenyl diphosphate + dimethylallyl diphosphate = (2E)-geranyl diphosphate + diphosphate. It catalyses the reaction isopentenyl diphosphate + (2E)-geranyl diphosphate = (2E,6E)-farnesyl diphosphate + diphosphate. Its pathway is isoprenoid biosynthesis; farnesyl diphosphate biosynthesis; farnesyl diphosphate from geranyl diphosphate and isopentenyl diphosphate: step 1/1. The protein operates within isoprenoid biosynthesis; geranyl diphosphate biosynthesis; geranyl diphosphate from dimethylallyl diphosphate and isopentenyl diphosphate: step 1/1. Its function is as follows. Catalyzes the sequential condensation of isopentenyl pyrophosphate with the allylic pyrophosphates, dimethylallyl pyrophosphate, and then with the resultant geranylpyrophosphate to the ultimate product farnesyl pyrophosphate. The polypeptide is Farnesyl pyrophosphate synthase 2 (FPS2) (Arabidopsis thaliana (Mouse-ear cress)).